The primary structure comprises 276 residues: NH(3)-dependent NAD(+) synthetase (276 aa).

43–50 (GISGGVDS) is an ATP binding site. Asp49 provides a ligand contact to Mg(2+). A deamido-NAD(+)-binding site is contributed by Arg146. Thr166 provides a ligand contact to ATP. Glu171 serves as a coordination point for Mg(2+). Deamido-NAD(+) is bound by residues Lys179 and Asp186. ATP-binding residues include Lys195 and Thr217. 266–267 (HK) provides a ligand contact to deamido-NAD(+).

Belongs to the NAD synthetase family. In terms of assembly, homodimer.

The enzyme catalyses deamido-NAD(+) + NH4(+) + ATP = AMP + diphosphate + NAD(+) + H(+). The protein operates within cofactor biosynthesis; NAD(+) biosynthesis; NAD(+) from deamido-NAD(+) (ammonia route): step 1/1. In terms of biological role, catalyzes the ATP-dependent amidation of deamido-NAD to form NAD. Uses ammonia as a nitrogen source. The protein is NH(3)-dependent NAD(+) synthetase of Shewanella woodyi (strain ATCC 51908 / MS32).